The sequence spans 611 residues: Growth hormone receptor (611 aa).

An N-terminal signal peptide occupies residues 1–20; the sequence is MDLRHLLLTLVLVCANDSLS. An N-linked (GlcNAc...) asparagine glycan is attached at Asn16. Over 21–240 the chain is Extracellular; sequence ASDDVLRLPQ…EFVHCAEEIE (220 aa). Cys34 and Cys44 form a disulfide bridge. A glycan (N-linked (GlcNAc...) asparagine) is linked at Asn53. A disulfide bond links Cys75 and Cys86. N-linked (GlcNAc...) asparagine glycosylation is present at Asn89. Cysteines 100 and 114 form a disulfide. In terms of domain architecture, Fibronectin type-III spans 125 to 228; the sequence is PPVHLNWTLL…EILYVSFSQA (104 aa). N-linked (GlcNAc...) asparagine glycosylation is found at Asn130, Asn135, and Asn174. Residues 214–218 carry the WSXWS motif motif; the sequence is FGEFS. A helical membrane pass occupies residues 241-264; the sequence is FPWFLVVIFGACGLAVTVILILLS. Residues 265-611 are Cytoplasmic-facing; that stretch reads KQSRLKMLIF…STDQLNKIMP (347 aa). The tract at residues 270–355 is required for JAK2 binding; sequence KMLIFPPVPV…HLKSHSCLGA (86 aa). The Box 1 motif motif lies at 273–281; it reads IFPPVPVPK. A UbE motif motif is present at residues 316–325; sequence DLWVEFIELD. A disordered region spans residues 411–455; sequence SLPSLANTDTQQPRMSTRPENSQPWPPFADSIDAASPSAHNQLSN. Residues 414–433 show a composition bias toward polar residues; sequence SLANTDTQQPRMSTRPENSQ.

This sequence belongs to the type I cytokine receptor family. Type 1 subfamily. In terms of processing, the soluble form (GHBP) is produced by phorbol ester-promoted proteolytic cleavage at the cell surface (shedding) by ADAM17/TACE.

Its subcellular location is the cell membrane. It is found in the secreted. Receptor for pituitary gland growth hormone (GH1) involved in regulating postnatal body growth. On ligand binding, couples to the JAK2/STAT5 pathway. In terms of biological role, the soluble form (GHBP) acts as a reservoir of growth hormone in plasma and may be a modulator/inhibitor of GH signaling. This Columba livia (Rock dove) protein is Growth hormone receptor (GHR).